Reading from the N-terminus, the 449-residue chain is MATTAQYLPRGPGGGAGGTGPLMHPDAAAAAAAAAERLHAGAAYREVQKLMHHEWLGAGAGHPVGLAHPQWLPTGGGGGGDWAGGPHLEHGKAGGGGTGRADDGGGGGGFHARLVHQGAAHAGAAWAQGGTAHHLGPAMSPSPGAGGGHQPQPLGLYAQAAYPGGGGGGLAGMLAAGGGGAGPGLHHALHEDGHEAQLEPSPPPHLGAHGHAHGHAHAGGLHAAAAHLHPGAGGGGSSVGEHSDEDAPSSDDLEQFAKQFKQRRIKLGFTQADVGLALGTLYGNVFSQTTICRFEALQLSFKNMCKLKPLLNKWLEETDSSSGSPTNLDKIAAQGRKRKKRTSIEVGVKGALESHFLKCPKPSAHEITGLADSLQLEKEVVRVWFCNRRQKEKRMTPAAGAGHPPMDDVYAPGELGPGGGSASPPSAPPPPPPAALHHHHHHTLPGSVQ.

5 disordered regions span residues 1–22, 76–108, 132–152, 184–251, and 393–449; these read MATT…TGPL, GGGG…GGGG, AHHL…HQPQ, GLHH…PSSD, and KRMT…GSVQ. Composition is skewed to gly residues over residues 11–20 and 93–108; these read GPGGGAGGTG and AGGG…GGGG. A compositionally biased stretch (low complexity) spans 132–143; sequence AHHLGPAMSPSP. The span at 188-197 shows a compositional bias: basic and acidic residues; sequence ALHEDGHEAQ. Low complexity predominate over residues 218 to 230; that stretch reads AGGLHAAAAHLHP. A POU-specific domain is found at 245–319; sequence EDAPSSDDLE…LLNKWLEETD (75 aa). The segment at residues 337–396 is a DNA-binding region (homeobox); the sequence is KRKKRTSIEVGVKGALESHFLKCPKPSAHEITGLADSLQLEKEVVRVWFCNRRQKEKRMT. Over residues 425–434 the composition is skewed to pro residues; sequence PSAPPPPPPA.

The protein belongs to the POU transcription factor family. Class-3 subfamily.

It is found in the nucleus. Its function is as follows. Transcription factor that binds to the octamer motif (5'-ATTTGCAT-3'). Acts as a transcriptional activator when binding cooperatively with SOX4, SOX11, or SOX12 to gene promoters. Acts as a transcriptional repressor of myelin-specific genes. This is POU domain, class 3, transcription factor 1 (Pou3f1) from Mus musculus (Mouse).